A 542-amino-acid chain; its full sequence is Neutral amino acid transporter B(0) (542 aa).

Met1 carries the post-translational modification N-acetylmethionine. At 1–52 the chain is on the cytoplasmic side; that stretch reads MVADPPRGDSKGLAAAEPTANGGLALASIEDQGEAAGGCCGSRDRVRRCLRA. A helical membrane pass occupies residues 53 to 82; it reads NLLVLLTVVAVVVGVALGLGVSGAGGALAL. Topologically, residues 83-95 are extracellular; that stretch reads GPERLSAFVFPGE. A helical transmembrane segment spans residues 96–117; sequence LLLRLLRMIILPLVVCSLIGGA. Over 118-131 the chain is Cytoplasmic; sequence ASLDPGALGRLGAW. The chain crosses the membrane as a helical span at residues 132–154; that stretch reads ALLFFLVTTLLASALGVALALAL. Residues 155–225 lie on the Extracellular side of the membrane; sequence QPGAASAAIN…GTRVKVPVGQ (71 aa). N-linked (GlcNAc...) asparagine glycosylation is found at Asn164 and Asn213. The helical transmembrane segment at 226-249 threads the bilayer; it reads EVEGMNILGLVVFAIVFGVALRKL. Residues 250 to 258 are Cytoplasmic-facing; it reads GPEGELLIR. Residues 259–286 traverse the membrane as a helical segment; sequence FFNSFNEATMVLVSWIMWYAPVGIMFLV. At 287-307 the chain is on the extracellular side; it reads AGKIVEMEDVGLLFARLGKYI. The helical transmembrane segment at 308–329 threads the bilayer; the sequence is LCCLLGHAIHGLLVLPLIYFLF. Residues 330–334 are Cytoplasmic-facing; sequence TRKNP. Positions 335-365 form an intramembrane region, discontinuously helical; sequence YRFLWGIVTPLATAFGTSSSSATLPLMMKCV. Over 366-374 the chain is Cytoplasmic; that stretch reads EENNGVAKH. Residues 375 to 401 form a helical membrane-spanning segment; it reads ISRFILPIGATVNMDGAALFQCVAAVF. Positions 383, 385, and 387 each coordinate Na(+). Residues 402 to 414 lie on the Extracellular side of the membrane; it reads IAQLSEQSLDFVK. The discontinuously helical intramembrane region spans 415 to 448; the sequence is IITILVTATASSVGAAGIPAGGVLTLAIILEAVN. Residues 449-461 are Extracellular-facing; the sequence is LPVDHISLILAVD. Residues 462 to 483 form a helical membrane-spanning segment; sequence WLVDRSCTVLNVEGDALGAGLL. 2 residues coordinate Na(+): Asn472 and Asp476. Residues 484 to 542 are Cytoplasmic-facing; sequence QNYVDRTEVRSTEPELIQVKSELPLDPLPAPTEEGNPLLRHYRGPAGDATVASEKESVM. Residue Ser494 is modified to Phosphoserine. Thr495 is subject to Phosphothreonine. 3 positions are modified to phosphoserine: Ser504, Ser536, and Ser540. Positions 509–542 are disordered; the sequence is DPLPAPTEEGNPLLRHYRGPAGDATVASEKESVM.

The protein belongs to the dicarboxylate/amino acid:cation symporter (DAACS) (TC 2.A.23) family. SLC1A5 subfamily. In terms of assembly, homotrimer.

Its subcellular location is the cell membrane. It localises to the melanosome. It catalyses the reaction L-glutamine(out) + L-serine(in) + Na(+)(out) = L-glutamine(in) + L-serine(out) + Na(+)(in). It carries out the reaction L-glutamine(in) + L-serine(out) + Na(+)(out) = L-glutamine(out) + L-serine(in) + Na(+)(in). The enzyme catalyses L-threonine(in) + L-glutamine(out) + Na(+)(out) = L-threonine(out) + L-glutamine(in) + Na(+)(in). The catalysed reaction is L-threonine(out) + L-glutamine(in) + Na(+)(out) = L-threonine(in) + L-glutamine(out) + Na(+)(in). It catalyses the reaction L-asparagine(in) + L-glutamine(out) + Na(+)(out) = L-asparagine(out) + L-glutamine(in) + Na(+)(in). It carries out the reaction L-asparagine(out) + L-glutamine(in) + Na(+)(out) = L-asparagine(in) + L-glutamine(out) + Na(+)(in). The enzyme catalyses L-glutamine(in) + L-alanine(out) + Na(+)(out) = L-glutamine(out) + L-alanine(in) + Na(+)(in). The catalysed reaction is L-valine(out) + L-glutamine(in) + Na(+)(out) = L-valine(in) + L-glutamine(out) + Na(+)(in). It catalyses the reaction L-glutamine(in) + L-methionine(out) + Na(+)(out) = L-glutamine(out) + L-methionine(in) + Na(+)(in). It carries out the reaction L-glutamine(in) + L-glutamate(out) + Na(+)(out) + H(+)(out) = L-glutamine(out) + L-glutamate(in) + Na(+)(in) + H(+)(in). The enzyme catalyses D-serine(in) + L-glutamine(out) + Na(+)(out) = D-serine(out) + L-glutamine(in) + Na(+)(in). The catalysed reaction is D-serine(in) + L-alanine(out) + Na(+)(out) = D-serine(out) + L-alanine(in) + Na(+)(in). It catalyses the reaction nitrate(in) = nitrate(out). It carries out the reaction iodide(out) = iodide(in). The enzyme catalyses thiocyanate(in) = thiocyanate(out). In terms of biological role, sodium-coupled antiporter of neutral amino acids. In a tri-substrate transport cycle, exchanges neutral amino acids between the extracellular and intracellular compartments, coupled to the inward cotransport of at least one sodium ion. The preferred substrate is the essential amino acid L-glutamine, a precursor for biosynthesis of proteins, nucleotides and amine sugars as well as an alternative fuel for mitochondrial oxidative phosphorylation. Exchanges L-glutamine with other neutral amino acids such as L-serine, L-threonine and L-asparagine in a bidirectional way. Provides L-glutamine to proliferating stem and activated cells driving the metabolic switch toward cell differentiation. The transport cycle is usually pH-independent, with the exception of L-glutamate. Transports extracellular L-glutamate coupled to the cotransport of one proton and one sodium ion in exchange for intracellular L-glutamine counter-ion. May provide for L-glutamate uptake in glial cells regulating glutamine/glutamate cycle in the nervous system. Can transport D-amino acids. Mediates D-serine release from the retinal glia potentially affecting NMDA receptor function in retinal neurons. Displays sodium- and amino acid-dependent but uncoupled channel-like anion conductance with a preference SCN(-) &gt;&gt; NO3(-) &gt; I(-) &gt; Cl(-). Through binding of the fusogenic protein syncytin-1/ERVW-1 may mediate trophoblasts syncytialization, the spontaneous fusion of their plasma membranes, an essential process in placental development. This Macaca fascicularis (Crab-eating macaque) protein is Neutral amino acid transporter B(0) (SLC1A5).